The chain runs to 462 residues: Argininosuccinate lyase (462 aa).

Belongs to the lyase 1 family. Argininosuccinate lyase subfamily.

It is found in the cytoplasm. The enzyme catalyses 2-(N(omega)-L-arginino)succinate = fumarate + L-arginine. It functions in the pathway amino-acid biosynthesis; L-arginine biosynthesis; L-arginine from L-ornithine and carbamoyl phosphate: step 3/3. This chain is Argininosuccinate lyase, found in Hydrogenovibrio crunogenus (strain DSM 25203 / XCL-2) (Thiomicrospira crunogena).